The primary structure comprises 621 residues: Signal recognition particle receptor subunit alpha homolog (621 aa).

The tract at residues 1–158 (MFDQLAVFTP…KKFEQYFRIK (158 aa)) is SRX. Positions 167–217 (HINPDNFTKNGSVPQSHNKNTKKKLRDTKGKKQSTGNVGSGRKWGRDGGML) are disordered. Residues 171 to 183 (DNFTKNGSVPQSH) are compositionally biased toward polar residues. The span at 185–198 (KNTKKKLRDTKGKK) shows a compositional bias: basic residues. Phosphoserine is present on S239. Residues 398-620 (YVFSIVGVNG…SVKWAVNTLM (223 aa)) form an NG domain region. GTP-binding positions include 404-411 (GVNGVGKS) and 510-514 (DTAGR). S523 is modified (phosphoserine). 572–575 (SKCD) contributes to the GTP binding site.

This sequence belongs to the GTP-binding SRP family. Heterodimer of an alpha and a beta chain.

It localises to the endoplasmic reticulum membrane. Component of the SRP (signal recognition particle) receptor (SR). Ensures, in conjunction with the signal recognition particle, the correct targeting of the nascent secretory proteins to the endoplasmic reticulum membrane system. GTP hydrolysis may enhance the fidelity of and provide unidirectionality to the targeting reaction. It is important but not essential for cell growth. May be directly involved in mitochondrial protein import. This Saccharomyces cerevisiae (strain ATCC 204508 / S288c) (Baker's yeast) protein is Signal recognition particle receptor subunit alpha homolog (SRP101).